We begin with the raw amino-acid sequence, 270 residues long: Large ribosomal subunit protein uL10 (270 aa).

Residues 234-270 (VTELEAGKTRPKREGNRRQAMNGDEMDEDQSSDEDSD) form a disordered region. The span at 238-250 (EAGKTRPKREGNR) shows a compositional bias: basic and acidic residues. Over residues 257-270 (DEMDEDQSSDEDSD) the composition is skewed to acidic residues.

It belongs to the universal ribosomal protein uL10 family. As to quaternary structure, associates with the pre-60S ribosomal particle.

The protein resides in the nucleus. It localises to the nucleolus. The protein localises to the cytoplasm. Component of the ribosome assembly machinery. Nuclear paralog of the ribosomal protein P0, it binds pre-60S subunits at an early stage of assembly in the nucleolus, and is replaced by P0 in cytoplasmic pre-60S subunits and mature 80S ribosomes. The polypeptide is Large ribosomal subunit protein uL10 (Chaetomium thermophilum (strain DSM 1495 / CBS 144.50 / IMI 039719) (Thermochaetoides thermophila)).